The primary structure comprises 469 residues: ATP synthase subunit beta (469 aa).

Position 153 to 160 (153 to 160 (GGAGVGKT)) interacts with ATP.

This sequence belongs to the ATPase alpha/beta chains family. As to quaternary structure, F-type ATPases have 2 components, CF(1) - the catalytic core - and CF(0) - the membrane proton channel. CF(1) has five subunits: alpha(3), beta(3), gamma(1), delta(1), epsilon(1). CF(0) has three main subunits: a(1), b(2) and c(9-12). The alpha and beta chains form an alternating ring which encloses part of the gamma chain. CF(1) is attached to CF(0) by a central stalk formed by the gamma and epsilon chains, while a peripheral stalk is formed by the delta and b chains.

The protein resides in the cell inner membrane. It catalyses the reaction ATP + H2O + 4 H(+)(in) = ADP + phosphate + 5 H(+)(out). Its function is as follows. Produces ATP from ADP in the presence of a proton gradient across the membrane. The catalytic sites are hosted primarily by the beta subunits. The polypeptide is ATP synthase subunit beta (Pseudothermotoga lettingae (strain ATCC BAA-301 / DSM 14385 / NBRC 107922 / TMO) (Thermotoga lettingae)).